A 159-amino-acid chain; its full sequence is Phosphoribosylaminoimidazole carboxylase (159 aa).

The substrate site is built by serine 11, aspartate 14, serine 38, lysine 41, glycine 67, and serine 69.

The enzyme catalyses 5-amino-1-(5-phospho-D-ribosyl)imidazole-4-carboxylate + H(+) = 5-amino-1-(5-phospho-beta-D-ribosyl)imidazole + CO2. The protein operates within purine metabolism; IMP biosynthesis via de novo pathway; 5-amino-1-(5-phospho-D-ribosyl)imidazole-4-carboxylate from 5-amino-1-(5-phospho-D-ribosyl)imidazole (carboxylase route): step 1/1. In terms of biological role, catalyzes the reversible conversion of 5-aminoimidazole ribonucleotide (AIR) and CO(2) to 4-carboxy-5-aminoimidazole ribonucleotide (CAIR). Does not accept N5-carboxyaminoimidazole ribonucleotide (N5-CAIR) as a substrate. The protein is Phosphoribosylaminoimidazole carboxylase of Treponema denticola (strain ATCC 35405 / DSM 14222 / CIP 103919 / JCM 8153 / KCTC 15104).